The following is a 756-amino-acid chain: Tubulin glycylase 3B (756 aa).

Residues 104–123 are disordered; the sequence is TPLPRTVTSSPTAPEAQKRQ. Residues 272–629 form the TTL domain; that stretch reads LEERMAFIED…DLPKNPTAAT (358 aa). Residues 440-443, Lys-453, and Asp-455 contribute to the ATP site; that span reads QKYI. The interval 709 to 736 is disordered; that stretch reads ITKKKKLSASAGSSTAASAQPSTQNLTT. Over residues 716-727 the composition is skewed to low complexity; it reads SASAGSSTAASA.

The protein localises to the cytoplasm. It localises to the cytoskeleton. The protein resides in the nucleus. Essential glycylase which modifies both tubulin and non-tubulin proteins, generating side chains of glycine on the gamma-carboxyl groups of specific glutamate residues of target proteins. Monoglycylates alpha-tubulin by adding a single glycine chain to generate monoglycine side chains, but is not involved in elongation step to generate polyglycine side chains on alpha-tubulin. Has the ability to both mono- and polyglycylate non-tubulin proteins such as up (Troponin T). Required for early steps of spermatogenesis. In Drosophila melanogaster (Fruit fly), this protein is Tubulin glycylase 3B (TTLL3B).